A 178-amino-acid chain; its full sequence is Probetacellulin (178 aa).

Residues Met-1–Ala-31 form the signal peptide. The Extracellular portion of the chain corresponds to Asp-32–Gln-118. Asn-34 is a glycosylation site (N-linked (GlcNAc...) asparagine). The 41-residue stretch at His-65–Glu-105 folds into the EGF-like domain. Intrachain disulfides connect Cys-69–Cys-82, Cys-77–Cys-93, and Cys-95–Cys-104. The propeptide at Leu-112 to Ala-178 is removed in mature form. Residues Ile-119–Cys-139 form a helical membrane-spanning segment. Residues Thr-140–Ala-178 are Cytoplasmic-facing.

Monomer. Interacts with EGFR and ERBB4. Synthesized in several tissues and tumor cells. Predominantly expressed in pancreas and small intestine.

The protein localises to the secreted. It localises to the extracellular space. Its subcellular location is the cell membrane. Functionally, growth factor that binds to EGFR, ERBB4 and other EGF receptor family members. Potent mitogen for retinal pigment epithelial cells and vascular smooth muscle cells. This is Probetacellulin (BTC) from Homo sapiens (Human).